The following is a 165-amino-acid chain: Large ribosomal subunit protein uL10 (165 aa).

This sequence belongs to the universal ribosomal protein uL10 family. As to quaternary structure, part of the ribosomal stalk of the 50S ribosomal subunit. The N-terminus interacts with L11 and the large rRNA to form the base of the stalk. The C-terminus forms an elongated spine to which L12 dimers bind in a sequential fashion forming a multimeric L10(L12)X complex.

Functionally, forms part of the ribosomal stalk, playing a central role in the interaction of the ribosome with GTP-bound translation factors. The protein is Large ribosomal subunit protein uL10 of Dechloromonas aromatica (strain RCB).